The primary structure comprises 173 residues: MNDLRYPIGQFTYKRPITEEMIDTWIQEIEDLPNELTKAIKDLDQKQLDTPYRVGGWTVRQVVHHVVDSHMNSYIRFKLALTEKNPTIKPYKEEKWAELPDSKLPVDVSLVMLESLHKRWVNLLYSLELEDLEKTFNHPETGETKLAVAIGLYAWHGRHHTAHITSLRKRLNW.

Zn(2+) is bound by residues His-65, His-156, and His-160.

Belongs to the metal hydrolase YfiT family. Homodimer. The cofactor is Zn(2+).

The protein localises to the cytoplasm. Functionally, possible metal-dependent hydrolase. In Bacillus cereus (strain ATCC 10987 / NRS 248), this protein is Putative metal-dependent hydrolase BCE_2729.